Reading from the N-terminus, the 457-residue chain is Chromosomal replication initiator protein DnaA (457 aa).

A domain I, interacts with DnaA modulators region spans residues 1–81 (MERDLSQLWQ…NNTDLVIKVQ (81 aa)). The tract at residues 81 to 119 (QEGSKPAARKVVAQQEIANTPVQHSAPMPENEPQAAFRS) is domain II. A domain III, AAA+ region region spans residues 120–337 (NLNQHHLFEN…GALNRVHANA (218 aa)). Residues Gly-165, Gly-167, Lys-168, and Thr-169 each coordinate ATP. Residues 338–457 (DFTGKAITID…WSNLIRTLSA (120 aa)) form a domain IV, binds dsDNA region.

Belongs to the DnaA family. In terms of assembly, oligomerizes as a right-handed, spiral filament on DNA at oriC.

It localises to the cytoplasm. Its function is as follows. Plays an essential role in the initiation and regulation of chromosomal replication. ATP-DnaA binds to the origin of replication (oriC) to initiate formation of the DNA replication initiation complex once per cell cycle. Binds the DnaA box (a 9 base pair repeat at the origin) and separates the double-stranded (ds)DNA. Forms a right-handed helical filament on oriC DNA; dsDNA binds to the exterior of the filament while single-stranded (ss)DNA is stabiized in the filament's interior. The ATP-DnaA-oriC complex binds and stabilizes one strand of the AT-rich DNA unwinding element (DUE), permitting loading of DNA polymerase. After initiation quickly degrades to an ADP-DnaA complex that is not apt for DNA replication. Binds acidic phospholipids. The protein is Chromosomal replication initiator protein DnaA of Mannheimia succiniciproducens (strain KCTC 0769BP / MBEL55E).